The chain runs to 92 residues: Small ribosomal subunit protein uS19 (92 aa).

This sequence belongs to the universal ribosomal protein uS19 family.

Functionally, protein S19 forms a complex with S13 that binds strongly to the 16S ribosomal RNA. This is Small ribosomal subunit protein uS19 from Staphylococcus epidermidis (strain ATCC 35984 / DSM 28319 / BCRC 17069 / CCUG 31568 / BM 3577 / RP62A).